Here is a 512-residue protein sequence, read N- to C-terminus: 2-isopropylmalate synthase (512 aa).

Residues 4–266 (IQFFDTTLRD…ETNIVLNQFK (263 aa)) form the Pyruvate carboxyltransferase domain. Mn(2+) contacts are provided by Asp-13, His-201, His-203, and Asn-237. Positions 390–512 (ELKHLQVQYV…SKQADFEEVK (123 aa)) are regulatory domain.

It belongs to the alpha-IPM synthase/homocitrate synthase family. LeuA type 1 subfamily. Homodimer. It depends on Mn(2+) as a cofactor.

Its subcellular location is the cytoplasm. The enzyme catalyses 3-methyl-2-oxobutanoate + acetyl-CoA + H2O = (2S)-2-isopropylmalate + CoA + H(+). The protein operates within amino-acid biosynthesis; L-leucine biosynthesis; L-leucine from 3-methyl-2-oxobutanoate: step 1/4. Functionally, catalyzes the condensation of the acetyl group of acetyl-CoA with 3-methyl-2-oxobutanoate (2-ketoisovalerate) to form 3-carboxy-3-hydroxy-4-methylpentanoate (2-isopropylmalate). The polypeptide is 2-isopropylmalate synthase (Listeria innocua serovar 6a (strain ATCC BAA-680 / CLIP 11262)).